The sequence spans 191 residues: Calcium-activated potassium channel subunit beta-1 (191 aa).

The Cytoplasmic segment spans residues 1–15; sequence MGKKLVMAQKRGETR. A helical transmembrane segment spans residues 16–36; that stretch reads ALCLGVAMVMCAVITYYILGT. The Extracellular portion of the chain corresponds to 37–157; the sequence is TMLPLYQKSV…YQRLYGPQAL (121 aa). N-linked (GlcNAc...) asparagine glycans are attached at residues N80 and N142. The chain crosses the membrane as a helical span at residues 158–178; the sequence is LASLFWPTFLLTGGLLIIAMV. Residues 179-191 are Cytoplasmic-facing; the sequence is KINRSLSILAAQK.

Belongs to the KCNMB (TC 8.A.14.1) family. KCNMB1 subfamily. In terms of assembly, interacts with KCNMA1 tetramer. There are probably 4 molecules of KCMNB1 per KCNMA1 tetramer. N-glycosylated.

It is found in the membrane. Its function is as follows. Regulatory subunit of the calcium activated potassium KCNMA1 (maxiK) channel. Modulates the calcium sensitivity and gating kinetics of KCNMA1, thereby contributing to KCNMA1 channel diversity. Increases the apparent Ca(2+)/voltage sensitivity of the KCNMA1 channel. It also modifies KCNMA1 channel kinetics and alters its pharmacological properties. It slows down the activation and the deactivation kinetics of the channel. Acts as a negative regulator of smooth muscle contraction by enhancing the calcium sensitivity to KCNMA1. Its presence is also a requirement for internal binding of the KCNMA1 channel opener dehydrosoyasaponin I (DHS-1) triterpene glycoside and for external binding of the agonist hormone 17-beta-estradiol (E2). Increases the binding activity of charybdotoxin (CTX) toxin to KCNMA1 peptide blocker by increasing the CTX association rate and decreasing the dissociation rate. This chain is Calcium-activated potassium channel subunit beta-1 (KCNMB1), found in Oryctolagus cuniculus (Rabbit).